The following is a 456-amino-acid chain: RuvB-like helicase 1 (456 aa).

70–77 is a binding site for ATP; the sequence is GPPGTGKT.

It belongs to the RuvB family. In terms of assembly, forms homohexameric rings. May form a dodecamer with rept made of two stacked hexameric rings. Component of the chromatin remodeling Ino80 complex.

It localises to the nucleus. The catalysed reaction is ATP + H2O = ADP + phosphate + H(+). Functionally, acts as a transcriptional coactivator in Wg signaling caused by altered arm signaling. Pont and rept interfere antagonistically with nuclear arm signaling function, and are required to enhance or reduce arm activity, respectively. Also an essential cofactor for the normal function of Myc; required for cellular proliferation and growth. Proposed core component of the chromatin remodeling Ino80 complex which is involved in transcriptional regulation, DNA replication and probably DNA repair. The sequence is that of RuvB-like helicase 1 from Drosophila pseudoobscura pseudoobscura (Fruit fly).